Consider the following 136-residue polypeptide: Small ribosomal subunit protein uS9 (136 aa).

A disordered region spans residues 111-136 (DARRTEPHKPSRSTKGPRAKRQKSYR). Over residues 120-136 (PSRSTKGPRAKRQKSYR) the composition is skewed to basic residues.

It belongs to the universal ribosomal protein uS9 family.

In Methanocaldococcus jannaschii (strain ATCC 43067 / DSM 2661 / JAL-1 / JCM 10045 / NBRC 100440) (Methanococcus jannaschii), this protein is Small ribosomal subunit protein uS9 (rps9).